Here is a 149-residue protein sequence, read N- to C-terminus: Proline-rich acidic protein 1 (149 aa).

A signal peptide spans 1–20 (MKRFLLATCLVAALLWEAGA). Disordered regions lie at residues 51 to 79 (EPLEKDNQLGPLLPEPKQKPAAAEEKRPD) and 97 to 122 (LQGPELDLDSIDHPMSDDVQDEEVPQ). Over residues 66–79 (PKQKPAAAEEKRPD) the composition is skewed to basic and acidic residues.

Interacts with MTTP. Interacts with MAD1L1. Predominantly expressed in the intestinal epithelial cells than in the liver (at protein level). Abundantly expressed in the uterus during late pregnancy by uterus epithelial cells. After birth expression rapidly decreases and is no longer found in the uterus by the third day. Also highly expressed in the small intestine where it shows a proximal-distal graded expression.

The protein localises to the secreted. It is found in the endoplasmic reticulum. Its function is as follows. Lipid-binding protein which promotes lipid absorption by facilitating MTTP-mediated lipid transfer (mainly triglycerides and phospholipids) and MTTP-mediated apoB lipoprotein assembly and secretion. Protects the gastrointestinal epithelium from irradiation-induced apoptosis. May play an important role in maintaining normal growth homeostasis in epithelial cells. Involved in p53/TP53-dependent cell survival after DNA damage. The polypeptide is Proline-rich acidic protein 1 (Prap1) (Mus musculus (Mouse)).